A 368-amino-acid chain; its full sequence is Glucose 1-dehydrogenase 2 (368 aa).

C41 provides a ligand contact to Zn(2+). T43 serves as a coordination point for substrate. Residues H68 and E69 each contribute to the Zn(2+) site. N91 serves as a coordination point for substrate. C95, C98, C101, C109, and Q152 together coordinate Zn(2+). 2 residues coordinate substrate: Q152 and D156. Residues 213-215 (NRR), 279-281 (FGF), 307-309 (LDN), and K356 each bind NADP(+). A substrate-binding site is contributed by N309.

It belongs to the zinc-containing alcohol dehydrogenase family. Glucose 1-dehydrogenase subfamily. Zn(2+) serves as cofactor.

It catalyses the reaction D-glucose + NAD(+) = D-glucono-1,5-lactone + NADH + H(+). It carries out the reaction D-glucose + NADP(+) = D-glucono-1,5-lactone + NADPH + H(+). Its function is as follows. Catalyzes the NAD(P)(+)-dependent oxidation of D-glucose to D-gluconate via gluconolactone. Can utilize both NAD(+) and NADP(+) as electron acceptor. Is involved in the degradation of glucose through a non-phosphorylative variant of the Entner-Doudoroff pathway. The sequence is that of Glucose 1-dehydrogenase 2 from Saccharolobus solfataricus (strain ATCC 35092 / DSM 1617 / JCM 11322 / P2) (Sulfolobus solfataricus).